We begin with the raw amino-acid sequence, 231 residues long: GrpE protein homolog, mitochondrial (231 aa).

A disordered region spans residues serine 49–lysine 71.

This sequence belongs to the GrpE family. As to quaternary structure, component of the PAM complex, at least composed of mtHsp70, MGE1, TIM44, PAM16, PAM17 and PAM18.

Its subcellular location is the mitochondrion matrix. In terms of biological role, essential component of the PAM complex, a complex required for the translocation of transit peptide-containing proteins from the inner membrane into the mitochondrial matrix in an ATP-dependent manner. Seems to control the nucleotide-dependent binding of SSC1 to substrate proteins. This Candida glabrata (strain ATCC 2001 / BCRC 20586 / JCM 3761 / NBRC 0622 / NRRL Y-65 / CBS 138) (Yeast) protein is GrpE protein homolog, mitochondrial (mge1).